A 372-amino-acid chain; its full sequence is Chorismate synthase (372 aa).

NADP(+) contacts are provided by arginine 48 and arginine 54. Residues 125 to 127 (RSS), 238 to 239 (NA), glycine 278, 293 to 297 (KPTSS), and arginine 319 contribute to the FMN site.

It belongs to the chorismate synthase family. Homotetramer. Requires FMNH2 as cofactor.

It carries out the reaction 5-O-(1-carboxyvinyl)-3-phosphoshikimate = chorismate + phosphate. Its pathway is metabolic intermediate biosynthesis; chorismate biosynthesis; chorismate from D-erythrose 4-phosphate and phosphoenolpyruvate: step 7/7. Functionally, catalyzes the anti-1,4-elimination of the C-3 phosphate and the C-6 proR hydrogen from 5-enolpyruvylshikimate-3-phosphate (EPSP) to yield chorismate, which is the branch point compound that serves as the starting substrate for the three terminal pathways of aromatic amino acid biosynthesis. This reaction introduces a second double bond into the aromatic ring system. The protein is Chorismate synthase of Xylella fastidiosa (strain M23).